A 113-amino-acid chain; its full sequence is Large ribosomal subunit protein uL22 (113 aa).

It belongs to the universal ribosomal protein uL22 family. In terms of assembly, part of the 50S ribosomal subunit.

In terms of biological role, this protein binds specifically to 23S rRNA; its binding is stimulated by other ribosomal proteins, e.g. L4, L17, and L20. It is important during the early stages of 50S assembly. It makes multiple contacts with different domains of the 23S rRNA in the assembled 50S subunit and ribosome. Its function is as follows. The globular domain of the protein is located near the polypeptide exit tunnel on the outside of the subunit, while an extended beta-hairpin is found that lines the wall of the exit tunnel in the center of the 70S ribosome. This chain is Large ribosomal subunit protein uL22, found in Halothermothrix orenii (strain H 168 / OCM 544 / DSM 9562).